The following is an 834-amino-acid chain: Kinesin-like protein KIF18B (834 aa).

Residues Val9–Ile353 form the Kinesin motor domain. Position 111 to 118 (Gly111 to Thr118) interacts with ATP. Positions Ile368–Ser404 form a coiled coil. 4 disordered regions span residues Gln400 to Ser508, Leu602 to Met642, Arg655 to Pro686, and Lys800 to Tyr834. Low complexity predominate over residues Ser411–Leu432. Thr431 carries the post-translational modification Phosphothreonine. Residues Glu462–Thr474 show a composition bias toward polar residues. Position 484 is a phosphoserine (Ser484). Residues Thr611–Thr620 show a composition bias toward basic and acidic residues. Positions Pro619–Leu627 match the Nuclear localization signal motif. Ser634 and Ser657 each carry phosphoserine. At Thr669 the chain carries Phosphothreonine. Ser814 is subject to Phosphoserine.

This sequence belongs to the TRAFAC class myosin-kinesin ATPase superfamily. Kinesin family. Interacts with MAPRE1; this interaction is required for efficient accumulation at microtubule plus ends. Interacts with KIF2C at microtubule tips; this interaction increases the affinity of both partners for microtubule plus ends and is required for robust microtubule depolymerization. KIF2C phosphorylation by AURKA or AURKB strongly reduces KIF18B-binding.

Its subcellular location is the nucleus. It localises to the cytoplasm. It is found in the cytoskeleton. Functionally, in complex with KIF2C, constitutes the major microtubule plus-end depolymerizing activity in mitotic cells. Its major role may be to transport KIF2C and/or MAPRE1 along microtubules. In Mus musculus (Mouse), this protein is Kinesin-like protein KIF18B (Kif18b).